A 250-amino-acid chain; its full sequence is 5-oxoprolinase subunit A (250 aa).

This sequence belongs to the LamB/PxpA family. Forms a complex composed of PxpA, PxpB and PxpC.

It catalyses the reaction 5-oxo-L-proline + ATP + 2 H2O = L-glutamate + ADP + phosphate + H(+). Catalyzes the cleavage of 5-oxoproline to form L-glutamate coupled to the hydrolysis of ATP to ADP and inorganic phosphate. The protein is 5-oxoprolinase subunit A of Streptomyces coelicolor (strain ATCC BAA-471 / A3(2) / M145).